The following is a 245-amino-acid chain: Flavin-dependent thymidylate synthase (245 aa).

One can recognise a ThyX domain in the interval 5–210 (IKVRLVNYTK…ELRPIIRWAK (206 aa)). FAD is bound by residues Ser-59, 83–85 (RHR), and Gln-91. DUMP is bound by residues 80 to 83 (QLVR), 91 to 95 (QQSMR), and Arg-149. The ThyX motif motif lies at 83-93 (RHRIASYTQQS). Residues 165 to 167 (NLR) and His-171 each bind FAD. Arg-176 contacts dUMP. Arg-176 serves as the catalytic Involved in ionization of N3 of dUMP, leading to its activation.

Belongs to the thymidylate synthase ThyX family. Homotetramer. The cofactor is FAD.

It carries out the reaction dUMP + (6R)-5,10-methylene-5,6,7,8-tetrahydrofolate + NADPH + H(+) = dTMP + (6S)-5,6,7,8-tetrahydrofolate + NADP(+). It functions in the pathway pyrimidine metabolism; dTTP biosynthesis. Catalyzes the reductive methylation of 2'-deoxyuridine-5'-monophosphate (dUMP) to 2'-deoxythymidine-5'-monophosphate (dTMP) while utilizing 5,10-methylenetetrahydrofolate (mTHF) as the methyl donor, and NADPH and FADH(2) as the reductant. This is Flavin-dependent thymidylate synthase from Thermococcus onnurineus (strain NA1).